The chain runs to 92 residues: Probable Fe(2+)-trafficking protein (92 aa).

This sequence belongs to the Fe(2+)-trafficking protein family.

Functionally, could be a mediator in iron transactions between iron acquisition and iron-requiring processes, such as synthesis and/or repair of Fe-S clusters in biosynthetic enzymes. This Shewanella sp. (strain W3-18-1) protein is Probable Fe(2+)-trafficking protein.